Reading from the N-terminus, the 625-residue chain is DNA-directed RNA polymerase subunit gamma (625 aa).

Zn(2+)-binding residues include C71, C73, C86, and C89. Mg(2+)-binding residues include D467, D469, and D471.

The protein belongs to the RNA polymerase beta' chain family. RpoC1 subfamily. As to quaternary structure, in cyanobacteria the RNAP catalytic core is composed of 2 alpha, 1 beta, 1 beta', 1 gamma and 1 omega subunit. When a sigma factor is associated with the core the holoenzyme is formed, which can initiate transcription. Requires Mg(2+) as cofactor. It depends on Zn(2+) as a cofactor.

The enzyme catalyses RNA(n) + a ribonucleoside 5'-triphosphate = RNA(n+1) + diphosphate. Functionally, DNA-dependent RNA polymerase catalyzes the transcription of DNA into RNA using the four ribonucleoside triphosphates as substrates. The chain is DNA-directed RNA polymerase subunit gamma from Rippkaea orientalis (strain PCC 8801 / RF-1) (Cyanothece sp. (strain PCC 8801)).